Reading from the N-terminus, the 596-residue chain is Arginine--tRNA ligase (596 aa).

The 'HIGH' region motif lies at 128 to 138; it reads ANPTSSLHVGH.

The protein belongs to the class-I aminoacyl-tRNA synthetase family. Monomer.

The protein resides in the cytoplasm. The enzyme catalyses tRNA(Arg) + L-arginine + ATP = L-arginyl-tRNA(Arg) + AMP + diphosphate. This Acinetobacter baumannii (strain AB307-0294) protein is Arginine--tRNA ligase.